The primary structure comprises 413 residues: Envelope glycoprotein M (413 aa).

At 1–19 (MGNYYYGGQESRLERISWR) the chain is on the intravirion side. A helical membrane pass occupies residues 20–40 (MWMVEAACYIVLVLLTLVSSF). Residues 41–88 (ASLSSTTGFPCFVGTVGESSFGGDLMGHGMTPARRDGVKIFFMSSPST) are Virion surface-facing. A helical membrane pass occupies residues 89–109 (LFVVFSAVFVWLVVAVYLLLG). Residues 110–133 (GVRVKMCNFDSSYGASELSSAVAT) lie on the Intravirion side of the membrane. A helical transmembrane segment spans residues 134–154 (MTSLVTLSITAWAWQVFVLML). Topologically, residues 155-160 (SYRQLT) are virion surface. Residues 161-181 (LAAVAFVGIFIAGLVFMLSFA) form a helical membrane-spanning segment. The Intravirion portion of the chain corresponds to 182–218 (SGGKSPENYATFNSQLKTVCKDVHAVITAFKAVVLNL). A helical membrane pass occupies residues 219 to 239 (FCVVFGVWHLMLVMLGAVIMV). Topologically, residues 240-251 (LNFGVSIPKATT) are virion surface. A helical transmembrane segment spans residues 252-272 (GALVVFIVLGLVYLMMIELVV). The Intravirion segment spans residues 273 to 277 (SRYVH). Residues 278–298 (VLLGPHLGMIIALGIAGTSAL) traverse the membrane as a helical segment. The Virion surface portion of the chain corresponds to 299 to 312 (SYAETLDEIMYASW). A helical membrane pass occupies residues 313–333 (KPVAAGILGAFSVIVLALAVL). Over 334 to 413 (RAVRSYKFHK…EDVIYENMKY (80 aa)) the chain is Intravirion.

Belongs to the herpesviridae glycoprotein M family. In terms of assembly, interacts (via N-terminus) with gN (via N-terminus). The gM-gN heterodimer forms the gCII complex.

It localises to the virion membrane. The protein localises to the host Golgi apparatus. Its subcellular location is the host trans-Golgi network. The protein resides in the host endosome membrane. It is found in the host nucleus inner membrane. In terms of biological role, envelope glycoprotein important for virion assembly and egress. Plays a role in the correct incorporation of gH-gL into virion membrane. Directs the glycoprotein N (gN) to the host trans-Golgi network. This is Envelope glycoprotein M from Psittacid herpesvirus 1 (isolate Amazon parrot/-/97-0001/1997) (PsHV-1).